The following is a 283-amino-acid chain: ATP phosphoribosyltransferase (283 aa).

The protein belongs to the ATP phosphoribosyltransferase family. Long subfamily. Mg(2+) is required as a cofactor.

It is found in the cytoplasm. The catalysed reaction is 1-(5-phospho-beta-D-ribosyl)-ATP + diphosphate = 5-phospho-alpha-D-ribose 1-diphosphate + ATP. Its pathway is amino-acid biosynthesis; L-histidine biosynthesis; L-histidine from 5-phospho-alpha-D-ribose 1-diphosphate: step 1/9. With respect to regulation, feedback inhibited by histidine. In terms of biological role, catalyzes the condensation of ATP and 5-phosphoribose 1-diphosphate to form N'-(5'-phosphoribosyl)-ATP (PR-ATP). Has a crucial role in the pathway because the rate of histidine biosynthesis seems to be controlled primarily by regulation of HisG enzymatic activity. This chain is ATP phosphoribosyltransferase, found in Phocaeicola vulgatus (strain ATCC 8482 / DSM 1447 / JCM 5826 / CCUG 4940 / NBRC 14291 / NCTC 11154) (Bacteroides vulgatus).